The sequence spans 917 residues: Hexokinase HKDC1 (917 aa).

Residues 1 to 20 are mitochondrial-binding peptide (MBP); the sequence is MFAVHLMAFYFSKLKEDQIK. Hexokinase domains are found at residues 16–458 and 464–905; these read EDQI…MVTA and QAQR…LITA. ATP-binding positions include arginine 30 and 84–89; that span reads DLGGSK. Residues 73–207 are hexokinase small subdomain 1; it reads DGSENGEFLS…DMDVDILALV (135 aa). D-glucose 6-phosphate is bound at residue 84 to 91; sequence DLGGSKFR. D-glucose contacts are provided by residues serine 155, 172–173, and 208–209; these read TK and ND. The tract at residues 208 to 447 is hexokinase large subdomain 1; the sequence is NDTVGTMMTC…CDVRFLLSES (240 aa). D-glucose 6-phosphate contacts are provided by aspartate 209 and threonine 232. Residues asparagine 235, glutamate 260, and 291–294 each bind D-glucose; that span reads QLFE. Position 413–415 (413–415) interacts with D-glucose 6-phosphate; it reads DGT. 425–426 contributes to the ATP binding site; sequence KR. D-glucose 6-phosphate is bound by residues serine 449 and 532 to 536; that span reads DLGGT. Positions 521–654 are hexokinase small subdomain 2; that stretch reads DGTEKGKFLA…EFDLDIVAVV (134 aa). 532–537 serves as a coordination point for ATP; that stretch reads DLGGTN. D-glucose contacts are provided by residues 602-603, 619-620, and 655-656; these read SF, TK, and ND. A hexokinase large subdomain 2 region spans residues 655–894; the sequence is NDTVGTMMTC…CDVTFMLSED (240 aa). Positions 656 and 679 each coordinate D-glucose 6-phosphate. Threonine 679 contacts ATP. Residues 681 to 682, glutamate 707, and glutamate 741 each bind D-glucose; that span reads SN. Residues 746 to 747, 783 to 787, and 862 to 866 contribute to the ATP site; these read GM, TKFLS, and TLYKL. D-glucose 6-phosphate is bound by residues 860-862 and serine 896; that span reads DGT.

It belongs to the hexokinase family. Widely expressed. Highly expressed in the brush border, surface epithelium and the myenteric plexus of the small and large intestines; the acinar centrocytes and interlobular ducts of the pancreas; and the alveolar macrophages in the lungs (at protein level). Present at moderate level in the thyroid follicular epithelium (at protein level).

Its subcellular location is the cytoplasm. The protein localises to the mitochondrion membrane. It is found in the photoreceptor inner segment. It carries out the reaction a D-hexose + ATP = a D-hexose 6-phosphate + ADP + H(+). The enzyme catalyses D-glucose + ATP = D-glucose 6-phosphate + ADP + H(+). It participates in carbohydrate metabolism; hexose metabolism. Its pathway is carbohydrate degradation; glycolysis; D-glyceraldehyde 3-phosphate and glycerone phosphate from D-glucose: step 1/4. In terms of biological role, catalyzes the phosphorylation of hexose to hexose 6-phosphate, although at very low level compared to other hexokinases. Has low glucose phosphorylating activity compared to other hexokinases. Involved in glucose homeostasis and hepatic lipid accumulation. Required to maintain whole-body glucose homeostasis during pregnancy; however additional evidences are required to confirm this role. The sequence is that of Hexokinase HKDC1 from Homo sapiens (Human).